The following is a 517-amino-acid chain: Ribose import ATP-binding protein RbsA 1 (517 aa).

ABC transporter domains are found at residues 11–251 and 263–507; these read LEMR…VGRD and YDPG…ALAT. Residue 43–50 participates in ATP binding; the sequence is GENGAGKS.

This sequence belongs to the ABC transporter superfamily. Ribose importer (TC 3.A.1.2.1) family. In terms of assembly, the complex is composed of an ATP-binding protein (RbsA), two transmembrane proteins (RbsC) and a solute-binding protein (RbsB).

It is found in the cell inner membrane. The enzyme catalyses D-ribose(out) + ATP + H2O = D-ribose(in) + ADP + phosphate + H(+). Functionally, part of the ABC transporter complex RbsABC involved in ribose import. Responsible for energy coupling to the transport system. In Burkholderia cenocepacia (strain HI2424), this protein is Ribose import ATP-binding protein RbsA 1.